The primary structure comprises 313 residues: E3 ubiquitin-protein ligase siah2 (313 aa).

Residues 1 to 49 (MSRPSSAGPCASKPCGKQKQPPPPPPHAPSLPATISGGPGASAPPAPTA) are disordered. Residues 20–29 (QPPPPPPHAP) show a composition bias toward pro residues. An RING-type zinc finger spans residues 69-104 (CPVCFDYVLPPILQCQAGHLVCNQCRQKLSCCPTCR). The segment at 119 to 311 (VASAVLFPCK…LGINVTISTC (193 aa)) is SBD. The SIAH-type zinc finger occupies 122–182 (AVLFPCKYAS…VMQHLTHSHK (61 aa)). Residues cysteine 127, cysteine 134, histidine 146, cysteine 150, cysteine 157, cysteine 164, histidine 176, and histidine 181 each coordinate Zn(2+).

This sequence belongs to the SINA (Seven in absentia) family. Homodimer. In terms of tissue distribution, widely expressed in early embryos until stage 40. It is then expressed in brain, spinal cord and in the developing and mature eye.

It localises to the cytoplasm. The enzyme catalyses S-ubiquitinyl-[E2 ubiquitin-conjugating enzyme]-L-cysteine + [acceptor protein]-L-lysine = [E2 ubiquitin-conjugating enzyme]-L-cysteine + N(6)-ubiquitinyl-[acceptor protein]-L-lysine.. Its pathway is protein modification; protein ubiquitination. Functionally, E3 ubiquitin-protein ligase that mediates ubiquitination and subsequent proteasomal degradation of target proteins. E3 ubiquitin ligases accept ubiquitin from an E2 ubiquitin-conjugating enzyme in the form of a thioester and then directly transfers the ubiquitin to targeted substrates. Involved in eye morphogenesis, probably triggers the ubiquitin-mediated degradation of different substrates. May play a role in the regulation of the cellular clock function. In Xenopus laevis (African clawed frog), this protein is E3 ubiquitin-protein ligase siah2 (siah2).